The primary structure comprises 358 residues: Peptide chain release factor 1 (358 aa).

The residue at position 233 (Gln-233) is an N5-methylglutamine.

This sequence belongs to the prokaryotic/mitochondrial release factor family. In terms of processing, methylated by PrmC. Methylation increases the termination efficiency of RF1.

Its subcellular location is the cytoplasm. Functionally, peptide chain release factor 1 directs the termination of translation in response to the peptide chain termination codons UAG and UAA. In Listeria monocytogenes serovar 1/2a (strain ATCC BAA-679 / EGD-e), this protein is Peptide chain release factor 1.